The primary structure comprises 201 residues: Large ribosomal subunit protein uL4 (201 aa).

Positions 44 to 68 (KAQKTRSEVAGTTKKSKKQKGGGAR) are disordered.

The protein belongs to the universal ribosomal protein uL4 family. As to quaternary structure, part of the 50S ribosomal subunit.

Its function is as follows. One of the primary rRNA binding proteins, this protein initially binds near the 5'-end of the 23S rRNA. It is important during the early stages of 50S assembly. It makes multiple contacts with different domains of the 23S rRNA in the assembled 50S subunit and ribosome. Functionally, forms part of the polypeptide exit tunnel. The sequence is that of Large ribosomal subunit protein uL4 from Xanthomonas axonopodis pv. citri (strain 306).